A 720-amino-acid chain; its full sequence is Ciliated left-right organizer metallopeptidase (720 aa).

The N-terminal stretch at 1–25 (MTVSFSMFQIYRLVWLSFMTSMCLS) is a signal peptide. At 26 to 668 (ACIHDSVLQE…ALYVSHMLYS (643 aa)) the chain is on the extracellular side. His-243 contributes to the Zn(2+) binding site. The active site involves Glu-244. His-247 and His-322 together coordinate Zn(2+). A helical membrane pass occupies residues 669–689 (YVIGGGCCAVCGAAIIFALFW). Over 690 to 720 (YKLRRQFLRVGSSYPPETSNHERPQIPADLV) the chain is Cytoplasmic.

Belongs to the peptidase M8 family. The cofactor is Zn(2+).

Its subcellular location is the membrane. Its function is as follows. Putative metalloprotease playing a role in the process of LR patterning. This chain is Ciliated left-right organizer metallopeptidase (cirop), found in Xenopus laevis (African clawed frog).